The following is a 134-amino-acid chain: Acyl-CoA thioester hydrolase YbgC (134 aa).

Asp18 is an active-site residue.

This sequence belongs to the 4-hydroxybenzoyl-CoA thioesterase family.

It is found in the cell inner membrane. Its function is as follows. Thioesterase that appears to be involved in phospholipid metabolism. Some specific acyl-ACPs could be physiological substrates. Displays acyl-CoA thioesterase activity on malonyl-CoA in vitro, catalyzing the hydrolysis of the thioester bond. This Escherichia coli O157:H7 protein is Acyl-CoA thioester hydrolase YbgC (ybgC).